Consider the following 236-residue polypeptide: NADH-quinone oxidoreductase subunit C (236 aa).

The interval 1-20 is disordered; that stretch reads MSPPNQDAQEGRPDSPTAEV.

The protein belongs to the complex I 30 kDa subunit family. As to quaternary structure, NDH-1 is composed of 14 different subunits. Subunits NuoB, C, D, E, F, and G constitute the peripheral sector of the complex.

It localises to the cell membrane. The catalysed reaction is a quinone + NADH + 5 H(+)(in) = a quinol + NAD(+) + 4 H(+)(out). NDH-1 shuttles electrons from NADH, via FMN and iron-sulfur (Fe-S) centers, to quinones in the respiratory chain. The immediate electron acceptor for the enzyme in this species is believed to be a menaquinone. Couples the redox reaction to proton translocation (for every two electrons transferred, four hydrogen ions are translocated across the cytoplasmic membrane), and thus conserves the redox energy in a proton gradient. The polypeptide is NADH-quinone oxidoreductase subunit C (Mycobacterium tuberculosis (strain ATCC 25177 / H37Ra)).